The sequence spans 278 residues: Orotidine 5'-phosphate decarboxylase (278 aa).

Substrate is bound by residues D40, K65–H67, D96–T105, Y230, and R248. K98 (proton donor) is an active-site residue.

Belongs to the OMP decarboxylase family.

It catalyses the reaction orotidine 5'-phosphate + H(+) = UMP + CO2. Its pathway is pyrimidine metabolism; UMP biosynthesis via de novo pathway; UMP from orotate: step 2/2. In Penicillium chrysogenum (Penicillium notatum), this protein is Orotidine 5'-phosphate decarboxylase (pyrG).